The following is a 373-amino-acid chain: 8-amino-7-oxononanoate synthase (373 aa).

R16 contributes to the substrate binding site. Residue 93–94 (GF) coordinates pyridoxal 5'-phosphate. A substrate-binding site is contributed by H118. Pyridoxal 5'-phosphate is bound by residues S165, 190-193 (DEAH), and 222-225 (TFSK). K225 is subject to N6-(pyridoxal phosphate)lysine. T334 contacts substrate.

The protein belongs to the class-II pyridoxal-phosphate-dependent aminotransferase family. BioF subfamily. In terms of assembly, homodimer. Requires pyridoxal 5'-phosphate as cofactor.

It catalyses the reaction 6-carboxyhexanoyl-[ACP] + L-alanine + H(+) = (8S)-8-amino-7-oxononanoate + holo-[ACP] + CO2. Its pathway is cofactor biosynthesis; biotin biosynthesis. Its function is as follows. Catalyzes the decarboxylative condensation of pimeloyl-[acyl-carrier protein] and L-alanine to produce 8-amino-7-oxononanoate (AON), [acyl-carrier protein], and carbon dioxide. The chain is 8-amino-7-oxononanoate synthase from Helicobacter pylori (strain J99 / ATCC 700824) (Campylobacter pylori J99).